A 354-amino-acid chain; its full sequence is 3'-5' exonuclease (354 aa).

Positions 1–120 (MERYLTKMPI…PSPEKEKPEK (120 aa)) are disordered. A compositionally biased stretch (basic and acidic residues) spans 13–50 (KANEVPKKEAFAKKETPKVARKATKTDTPKELKDKENA). Positions 59 to 70 (TKGRPGRPAAKR) are enriched in basic residues. The segment covering 71-91 (KNLDTPDVKDEKIAMEEENPP) has biased composition (basic and acidic residues). A phosphoserine mark is found at serine 104, serine 110, and serine 112. The 3'-5' exonuclease domain occupies 149-314 (WVEKQKDDVV…GQVIYRELER (166 aa)). The Mg(2+) site is built by aspartate 163, glutamate 165, and aspartate 301.

This sequence belongs to the WRNexo family.

The protein localises to the nucleus. Its function is as follows. Has exonuclease activity on both single-stranded and duplex templates bearing overhangs, but not blunt ended duplex DNA, and cleaves in a 3'-5' direction. Essential for the formation of DNA replication focal centers. Has an important role in maintaining genome stability. This chain is 3'-5' exonuclease, found in Drosophila sechellia (Fruit fly).